The sequence spans 141 residues: Large ribosomal subunit protein uL13 (141 aa).

Belongs to the universal ribosomal protein uL13 family. Part of the 50S ribosomal subunit.

This protein is one of the early assembly proteins of the 50S ribosomal subunit, although it is not seen to bind rRNA by itself. It is important during the early stages of 50S assembly. This is Large ribosomal subunit protein uL13 from Helicobacter pylori (strain Shi470).